Reading from the N-terminus, the 244-residue chain is RNA transcription, translation and transport factor protein (244 aa).

Residues Lys20, Lys62, and Lys98 each carry the N6-acetyllysine modification.

The protein belongs to the RTRAF family. In terms of assembly, homodimer. Interacts with FAM98A (via N- and C-terminus). Interacts with NIN; which may prevent phosphorylation of NIN. Interacts with POLR2A. Component of a tRNA-splicing ligase complex.

The protein localises to the nucleus. Its subcellular location is the cytoplasm. The protein resides in the cytosol. It localises to the perinuclear region. It is found in the cytoskeleton. The protein localises to the microtubule organizing center. Its subcellular location is the centrosome. RNA-binding protein involved in modulation of mRNA transcription by Polymerase II. Component of the tRNA-splicing ligase complex and is required for tRNA ligation. May be required for RNA transport. The sequence is that of RNA transcription, translation and transport factor protein from Mus musculus (Mouse).